Consider the following 668-residue polypeptide: Probable tRNA (uracil-O(2)-)-methyltransferase (668 aa).

The disordered stretch occupies residues 441-460; that stretch reads QHTDSLHISTKSSLDKDDPP. A C3H1-type zinc finger spans residues 620 to 649; the sequence is LKTRLCWFYVHHPNGCPRVAKSCPYAHGAE.

The protein belongs to the TRM44 family.

The protein resides in the cytoplasm. It carries out the reaction uridine(44) in tRNA(Ser) + S-adenosyl-L-methionine = 2'-O-methyluridine(44) in tRNA(Ser) + S-adenosyl-L-homocysteine + H(+). Its function is as follows. Probable adenosyl-L-methionine (AdoMet)-dependent tRNA (uracil-O(2)-)-methyltransferase. The protein is Probable tRNA (uracil-O(2)-)-methyltransferase (trmt44) of Xenopus laevis (African clawed frog).